Consider the following 209-residue polypeptide: Floral homeotic protein GLOBOSA (209 aa).

The MADS-box domain occupies R3–F57. Residues H82–N173 form the K-box domain.

In terms of tissue distribution, expressed mainly in floral organs and, within the flower, expression is restricted to petals and stamens.

The protein localises to the nucleus. Its function is as follows. Transcription factor involved in the genetic control of flower development. Acts in conjunction with DEFICIENS (defA). The chain is Floral homeotic protein GLOBOSA (GLO) from Nicotiana tabacum (Common tobacco).